A 503-amino-acid polypeptide reads, in one-letter code: Discoidin, CUB and LCCL domain-containing protein 1 (503 aa).

An N-terminal signal peptide occupies residues 1-25 (MGTGAGGPSVLALLFAVCAPLRLQA). Residues 26 to 250 (EELGDGCGHI…FTTPGMNITT (225 aa)) are Extracellular-facing. Disulfide bonds link cysteine 32/cysteine 59, cysteine 85/cysteine 103, cysteine 149/cysteine 165, and cysteine 169/cysteine 191. The 110-residue stretch at 32–141 (CGHIVTSQDS…RGFLLTYASS (110 aa)) folds into the CUB domain. Asparagine 55 carries an N-linked (GlcNAc...) asparagine glycan. The LCCL domain maps to 143–239 (HPDLITCLER…RHGSLSEKRF (97 aa)). Asparagine 247 carries N-linked (GlcNAc...) asparagine glycosylation. A helical transmembrane segment spans residues 251 to 271 (VAIPSVIFIALLLTGMGIFAI). At 272 to 503 (CRKRKKKGNP…LNQTAMTALL (232 aa)) the chain is on the cytoplasmic side. Position 305 is a phosphoserine (serine 305). Threonine 406 is modified (phosphothreonine). The interval 410-503 (QSGYRVPGPR…LNQTAMTALL (94 aa)) is disordered. Positions 494–503 (LNQTAMTALL) are enriched in polar residues.

It localises to the membrane. This Mus musculus (Mouse) protein is Discoidin, CUB and LCCL domain-containing protein 1 (Dcbld1).